Reading from the N-terminus, the 640-residue chain is Dextranase (640 aa).

A signal peptide spans 1-32; sequence MPGTGLGRLAKRMTAAAAVFFISTSAVLPAQA. A propeptide spanning residues 33-49 is cleaved from the precursor; that stretch reads ATAPAAAPPGVPAALKA. The tract at residues 248–269 is disordered; that stretch reads EQKERLVPTEESGSIHYPEPGE.

This sequence belongs to the glycosyl hydrolase 49 family.

The protein resides in the secreted. It carries out the reaction Endohydrolysis of (1-&gt;6)-alpha-D-glucosidic linkages in dextran.. Functionally, efficiently decomposes water-insoluble glucan as well as dextran. The protein is Dextranase of Arthrobacter sp. (strain CB-8).